Reading from the N-terminus, the 365-residue chain is Class E basic helix-loop-helix protein 22 (365 aa).

Disordered stretches follow at residues 34-93 (AFRS…GGGG), 134-156 (GRGS…DGRC), and 188-225 (HLHG…KEQK). Over residues 82–93 (GGGGAGGGGGGG) the composition is skewed to gly residues. Positions 191-216 (GGAGLPPGGSTGSGGGGSGGGGGGGS) are enriched in gly residues. The bHLH domain maps to 226 to 280 (ALRLNINARERRRMHDLNDALDELRAVIPYAHSPSVRKLSKIATLLLAKNYILMQ).

Heterodimer with other bHLH proteins, like TCF3/E47. Kidney, lung, brain and pancreas (insulinoma).

The protein localises to the nucleus. In terms of biological role, inhibits DNA binding of TCF3/E47 homodimers and TCF3 (E47)/NEUROD1 heterodimers and acts as a strong repressor of Neurod1 and Myod-responsive genes, probably by heterodimerization with class a basic helix-loop-helix factors. Despite the presence of an intact basic domain, does not bind to DNA. The chain is Class E basic helix-loop-helix protein 22 (BHLHE22) from Mesocricetus auratus (Golden hamster).